Here is a 268-residue protein sequence, read N- to C-terminus: Tryptophan synthase alpha chain (268 aa).

Catalysis depends on proton acceptor residues Glu49 and Asp60.

The protein belongs to the TrpA family. In terms of assembly, tetramer of two alpha and two beta chains.

It catalyses the reaction (1S,2R)-1-C-(indol-3-yl)glycerol 3-phosphate + L-serine = D-glyceraldehyde 3-phosphate + L-tryptophan + H2O. It functions in the pathway amino-acid biosynthesis; L-tryptophan biosynthesis; L-tryptophan from chorismate: step 5/5. Functionally, the alpha subunit is responsible for the aldol cleavage of indoleglycerol phosphate to indole and glyceraldehyde 3-phosphate. This is Tryptophan synthase alpha chain from Xylella fastidiosa (strain 9a5c).